The primary structure comprises 155 residues: Antitoxin HicB 1 (155 aa).

The HTH cro/C1-type domain maps to methionine 99 to serine 153. Residues glutamine 110–aspartate 129 constitute a DNA-binding region (H-T-H motif).

This sequence belongs to the HicB antitoxin family. In terms of assembly, probably forms a complex with the probable mRNA interferase HicA1 (its cognate toxin); when complexed with HicA 1 inhibits the toxin activity.

Antitoxin component of a type II toxin-antitoxin (TA) system. Functions as an mRNA interferase antitoxin preventing effects of the HicA 1 toxin. This chain is Antitoxin HicB 1 (hicB1), found in Photorhabdus laumondii subsp. laumondii (strain DSM 15139 / CIP 105565 / TT01) (Photorhabdus luminescens subsp. laumondii).